A 322-amino-acid chain; its full sequence is uncharacterized protein (322 aa).

Positions 269–289 are disordered; the sequence is QDEEEEPRDERRPRRRLGKAQ.

This is an uncharacterized protein from Sinorhizobium fredii (strain NBRC 101917 / NGR234).